Consider the following 416-residue polypeptide: Multifunctional CCA protein (416 aa).

2 residues coordinate ATP: G8 and R11. Residues G8 and R11 each contribute to the CTP site. 2 residues coordinate Mg(2+): D21 and D23. ATP-binding residues include R91, R138, and R141. Residues R91, R138, and R141 each coordinate CTP. An HD domain is found at 229-331 (TGLHQELVSD…YELLQRCDAF (103 aa)).

This sequence belongs to the tRNA nucleotidyltransferase/poly(A) polymerase family. Bacterial CCA-adding enzyme type 1 subfamily. Monomer. Can also form homodimers and oligomers. Mg(2+) serves as cofactor. Requires Ni(2+) as cofactor.

It catalyses the reaction a tRNA precursor + 2 CTP + ATP = a tRNA with a 3' CCA end + 3 diphosphate. The catalysed reaction is a tRNA with a 3' CCA end + 2 CTP + ATP = a tRNA with a 3' CCACCA end + 3 diphosphate. Its function is as follows. Catalyzes the addition and repair of the essential 3'-terminal CCA sequence in tRNAs without using a nucleic acid template. Adds these three nucleotides in the order of C, C, and A to the tRNA nucleotide-73, using CTP and ATP as substrates and producing inorganic pyrophosphate. tRNA 3'-terminal CCA addition is required both for tRNA processing and repair. Also involved in tRNA surveillance by mediating tandem CCA addition to generate a CCACCA at the 3' terminus of unstable tRNAs. While stable tRNAs receive only 3'-terminal CCA, unstable tRNAs are marked with CCACCA and rapidly degraded. This is Multifunctional CCA protein from Xylella fastidiosa (strain 9a5c).